We begin with the raw amino-acid sequence, 66 residues long: Large ribosomal subunit protein bL35 (66 aa).

The segment covering 1–16 (MPKQKTHRASAKRFKR) has biased composition (basic residues). Residues 1–20 (MPKQKTHRASAKRFKRTGSG) form a disordered region.

This sequence belongs to the bacterial ribosomal protein bL35 family.

In Streptococcus thermophilus (strain ATCC BAA-250 / LMG 18311), this protein is Large ribosomal subunit protein bL35.